Reading from the N-terminus, the 200-residue chain is Phospholipase A2 inhibitor 1 (200 aa).

A signal peptide spans 1 to 19; sequence MKSLHIICLLFIFVARGNS. Cystine bridges form between Cys22–Cys46, Cys25–Cys32, Cys39–Cys67, Cys73–Cys94, Cys95–Cys100, Cys118–Cys143, Cys136–Cys165, and Cys169–Cys191. An N-linked (GlcNAc...) asparagine glycan is attached at Asn176.

Belongs to the CNF-like-inhibitor family. As to quaternary structure, occurs as a mixture of oligomers. Tetrameric arrangement appears to be the predominant quaternary structure. In terms of processing, N-glycosylated. In terms of tissue distribution, expressed by the liver.

The protein localises to the secreted. Its function is as follows. Inhibits basic phospholipase A2 isozymes PLA-B, BP-I and BP-II. This is Phospholipase A2 inhibitor 1 from Protobothrops flavoviridis (Habu).